We begin with the raw amino-acid sequence, 280 residues long: Pantothenate synthetase (280 aa).

ATP is bound at residue 31–38 (MGNLHAGH). The Proton donor role is filled by His38. Gln62 provides a ligand contact to (R)-pantoate. A beta-alanine-binding site is contributed by Gln62. 150–153 (GKKD) is a binding site for ATP. Residue Gln156 coordinates (R)-pantoate. Residues Val179 and 187-190 (MSSR) contribute to the ATP site.

Belongs to the pantothenate synthetase family. Homodimer.

It is found in the cytoplasm. The enzyme catalyses (R)-pantoate + beta-alanine + ATP = (R)-pantothenate + AMP + diphosphate + H(+). It participates in cofactor biosynthesis; (R)-pantothenate biosynthesis; (R)-pantothenate from (R)-pantoate and beta-alanine: step 1/1. Its function is as follows. Catalyzes the condensation of pantoate with beta-alanine in an ATP-dependent reaction via a pantoyl-adenylate intermediate. This is Pantothenate synthetase from Xanthomonas euvesicatoria pv. vesicatoria (strain 85-10) (Xanthomonas campestris pv. vesicatoria).